A 483-amino-acid polypeptide reads, in one-letter code: Altronate oxidoreductase (483 aa).

An NAD(+)-binding site is contributed by 18 to 29 (IIQFGEGNFLRA).

This sequence belongs to the mannitol dehydrogenase family. UxaB subfamily.

The enzyme catalyses D-altronate + NAD(+) = keto-D-tagaturonate + NADH + H(+). The protein operates within carbohydrate metabolism; pentose and glucuronate interconversion. The polypeptide is Altronate oxidoreductase (Klebsiella pneumoniae subsp. pneumoniae (strain ATCC 700721 / MGH 78578)).